We begin with the raw amino-acid sequence, 36 residues long: Gloverin (36 aa).

It localises to the secreted. Antibacterial protein. The protein is Gloverin of Heliothis virescens (Tobacco budworm moth).